The sequence spans 367 residues: MNSTESYFGTDDYDNTEYYSIPPDHGPCSLEEVRNFTKVFVPIAYSLICVFGLLGNIMVVMTFAFYKKARSMTDVYLLNMAITDILFVLTLPFWAVTHATNTWVFSDALCKLMKGTYAVNFNCGMLLLACISMDRYIAIVQATKSFRVRSRTLTHSKVICVAVWFISIIISSPTFIFNKKYELQDRDVCEPRYRSVSEPITWKLLGMGLELFFGFFTPLLFMVFCYLFIIKTLVQAQNSKRHRAIRVVIAVVLVFLACQIPHNMVLLVTAVNTGKVGRSCSTEKVLAYTRNVAEVLAFLHCCLNPVLYAFIGQKFRNYFMKIMKDVWCMRRKNKMPGFLCARVYSESYISRQTSETVENDNASSFTM.

Topologically, residues 1 to 39 (MNSTESYFGTDDYDNTEYYSIPPDHGPCSLEEVRNFTKV) are extracellular. Asn2 and Asn35 each carry an N-linked (GlcNAc...) asparagine glycan. The chain crosses the membrane as a helical span at residues 40 to 66 (FVPIAYSLICVFGLLGNIMVVMTFAFY). At 67 to 75 (KKARSMTDV) the chain is on the cytoplasmic side. A helical membrane pass occupies residues 76–96 (YLLNMAITDILFVLTLPFWAV). Topologically, residues 97 to 111 (THATNTWVFSDALCK) are extracellular. A disulfide bridge connects residues Cys110 and Cys189. Residues 112–133 (LMKGTYAVNFNCGMLLLACISM) form a helical membrane-spanning segment. The Cytoplasmic segment spans residues 134–151 (DRYIAIVQATKSFRVRSR). A helical transmembrane segment spans residues 152–172 (TLTHSKVICVAVWFISIIISS). The Extracellular segment spans residues 173-203 (PTFIFNKKYELQDRDVCEPRYRSVSEPITWK). The helical transmembrane segment at 204–230 (LLGMGLELFFGFFTPLLFMVFCYLFII) threads the bilayer. The Cytoplasmic segment spans residues 231 to 246 (KTLVQAQNSKRHRAIR). The helical transmembrane segment at 247 to 271 (VVIAVVLVFLACQIPHNMVLLVTAV) threads the bilayer. Topologically, residues 272-295 (NTGKVGRSCSTEKVLAYTRNVAEV) are extracellular. Residues 296–313 (LAFLHCCLNPVLYAFIGQ) form a helical membrane-spanning segment. Over 314-367 (KFRNYFMKIMKDVWCMRRKNKMPGFLCARVYSESYISRQTSETVENDNASSFTM) the chain is Cytoplasmic.

It belongs to the G-protein coupled receptor 1 family. Sperm. Mainly localized in the principal piece and neck region of the tail but is also found in the acrosomal region in a small percentage of sperm cells. Expressed in natural regulatory T cells (nTregs) and a subset of early thymocyte progenitor double-negative 1 (DN1) cells. Expressed in memory B cells. Expressed by IL17 producing helper T-cells (Th17), type 1 effector cells (Th1), type 2 effector cells (Th2) and regulatory T-cells (Treg) (at protein level). Expressed by Th17 cells in spleen, Peyers patches, and lamina propria of small and large intestine. Highly expressed in testis, lung, colon, and dendritic cells.

Its subcellular location is the cell membrane. The protein resides in the cell surface. In terms of biological role, receptor for the C-C type chemokine CCL20. Binds to CCL20 and subsequently transduces a signal by increasing the intracellular calcium ion levels. Although CCL20 is its major ligand it can also act as a receptor for non-chemokine ligands such as beta-defensins. Binds to defensin DEFB1 leading to increase in intracellular calcium ions and cAMP levels. Its binding to DEFB1 is essential for the function of DEFB1 in regulating sperm motility and bactericidal activity. Binds to defensins DEFB4 and DEFB4A/B and mediates their chemotactic effects. The ligand-receptor pair CCL20-CCR6 is responsible for the chemotaxis of dendritic cells (DC), effector/memory T-cells and B-cells and plays an important role at skin and mucosal surfaces under homeostatic and inflammatory conditions, as well as in pathology, including cancer and various autoimmune diseases. CCR6-mediated signals are essential for immune responses to microbes in the intestinal mucosa and in the modulation of inflammatory responses initiated by tissue insult and trauma. CCR6 is essential for the recruitment of both the pro-inflammatory IL17 producing helper T-cells (Th17) and the regulatory T-cells (Treg) to sites of inflammation. Required for the normal migration of Th17 cells in Peyers patches and other related tissue sites of the intestine and plays a role in regulating effector T-cell balance and distribution in inflamed intestine. Plays an important role in the coordination of early thymocyte precursor migration events important for normal subsequent thymocyte precursor development, but is not required for the formation of normal thymic natural regulatory T-cells (nTregs). Required for optimal differentiation of DN2 and DN3 thymocyte precursors. Essential for B-cell localization in the subepithelial dome of Peyers-patches and for efficient B-cell isotype switching to IgA in the Peyers-patches. Essential for appropriate anatomical distribution of memory B-cells in the spleen and for the secondary recall response of memory B-cells. Positively regulates sperm motility and chemotaxis via its binding to CCL20. The sequence is that of C-C chemokine receptor type 6 (Ccr6) from Mus musculus (Mouse).